The chain runs to 358 residues: Protein UL24 (358 aa).

The protein belongs to the herpesviridae US22 family.

It is found in the virion tegument. In Homo sapiens (Human), this protein is Protein UL24 (UL24).